The primary structure comprises 273 residues: 4-diphosphocytidyl-2-C-methyl-D-erythritol kinase (273 aa).

Lys9 is an active-site residue. 90–100 is a binding site for ATP; that stretch reads PVAAGLGGGSA. Asp129 is an active-site residue.

This sequence belongs to the GHMP kinase family. IspE subfamily.

The catalysed reaction is 4-CDP-2-C-methyl-D-erythritol + ATP = 4-CDP-2-C-methyl-D-erythritol 2-phosphate + ADP + H(+). Its pathway is isoprenoid biosynthesis; isopentenyl diphosphate biosynthesis via DXP pathway; isopentenyl diphosphate from 1-deoxy-D-xylulose 5-phosphate: step 3/6. Its function is as follows. Catalyzes the phosphorylation of the position 2 hydroxy group of 4-diphosphocytidyl-2C-methyl-D-erythritol. This chain is 4-diphosphocytidyl-2-C-methyl-D-erythritol kinase, found in Erythrobacter litoralis (strain HTCC2594).